The sequence spans 916 residues: Isoleucine--tRNA ligase (916 aa).

The 'HIGH' region signature appears at 58–68 (PYANGHLHIGH). E568 serves as a coordination point for L-isoleucyl-5'-AMP. Residues 609-613 (KMSKS) carry the 'KMSKS' region motif. K612 provides a ligand contact to ATP. 4 residues coordinate Zn(2+): C891, C894, C906, and C909.

Belongs to the class-I aminoacyl-tRNA synthetase family. IleS type 1 subfamily. In terms of assembly, monomer. It depends on Zn(2+) as a cofactor.

The protein resides in the cytoplasm. It carries out the reaction tRNA(Ile) + L-isoleucine + ATP = L-isoleucyl-tRNA(Ile) + AMP + diphosphate. Functionally, catalyzes the attachment of isoleucine to tRNA(Ile). As IleRS can inadvertently accommodate and process structurally similar amino acids such as valine, to avoid such errors it has two additional distinct tRNA(Ile)-dependent editing activities. One activity is designated as 'pretransfer' editing and involves the hydrolysis of activated Val-AMP. The other activity is designated 'posttransfer' editing and involves deacylation of mischarged Val-tRNA(Ile). The polypeptide is Isoleucine--tRNA ligase (Campylobacter fetus subsp. fetus (strain 82-40)).